The primary structure comprises 712 residues: MAYGRRYWRRRRWRRRGGRWWRRRRPWKTRWRRRRRRWRRRRYGRRARRFRRRHRVGRWRKLFRRVKSRVVRQWDPNVTRRCMINGYDHALFWGQQAQHRILYDNLPWPIKKEGTQEGGSMNMMQLTLQFLYKDNLAGRNRWTRSNWDMDLAKYHETTLLFPRHRNYSYVVFITRGPNDILDEHTYPGLHPEKMLGRRKKIVVWSKDLRPHGKNYIRVRVPPPQVFKNQWYFQRDICQMPILTLGFAAFDPVNVTLAGNMANSSIILWGIPYWSRPMPYNTWYDYWTKCAGPQNIPWSDRQTNIAAGITQKSAQTCLKLKNKHFGLTNTAIVSDYDKDNIDKNTKQIKTIVMSLNRWYPKWPMKWKDAGDINTQTPFPYRYSWREDQGWGNKVRLWTRECRTDIPEETLGIENMPLYVLMNGYIDYVTNHSTHSPLNWVVSVFCPYTDPPMTNVIPVGKDWFIQNVEPGENKYPSDNADNTFAPGEKTKIKNYDSSKDEFTGNVIRAPDVYDSLPAQQALYIASPFSLKWAQTTGSIVFFYQSKWTWGGDFPRQRPIIDPCNRPKWGGLPVTGYDETGLLLQNPEKAEARARGHLGDLRRGDLTKTALKRLMELTSTEEGSPQKKKRRDKEVRTTADLLRPEDVYCWMSPTPETPPKAGKTPESSFAETYDNHTKLAKRVKKEIHNQNRRHRLLLAHLRRERDRLLGHHLLR.

Disordered regions lie at residues 614 to 633 (LTSTEEGSPQKKKRRDKEVR) and 646 to 665 (CWMSPTPETPPKAGKTPESS). A coiled-coil region spans residues 670 to 706 (YDNHTKLAKRVKKEIHNQNRRHRLLLAHLRRERDRLL).

The protein belongs to the anelloviridae capsid protein family.

The protein resides in the virion. Functionally, self-assembles to form an icosahedral capsid with a T=1 symmetry, about 30 nm in diameter, and consisting of 60 capsid proteins. The capsid encapsulates the genomic DNA. Capsid protein is involved in attachment and entry into the host cell. This Torque teno tamarin virus (isolate So-TTV2) protein is Capsid protein.